The sequence spans 331 residues: Bifunctional nuclease (331 aa).

The region spanning 126 to 261 is the BFN domain; the sequence is CVQNNPRVLR…RIAYNNGLKV (136 aa). Residues 291-326 enclose the UVR domain; it reads EAQEFDLVRNMLVAAVEERYKDAAQYRDQLFMFRAK.

It belongs to the bifunctional nuclease family.

The protein resides in the nucleus. In terms of biological role, bifunctional nuclease with both RNase and DNase activities. Involved in basal defense response. Participates in abscisic acid-derived callose deposition following infection by a necrotrophic pathogen. This chain is Bifunctional nuclease (BBD), found in Oryza minuta.